The sequence spans 85 residues: UPF0291 protein str0508 (85 aa).

The interval 62–85 (TPEKLRQVQREKGLHGRSLDDPES) is disordered.

Belongs to the UPF0291 family.

Its subcellular location is the cytoplasm. This chain is UPF0291 protein str0508, found in Streptococcus thermophilus (strain CNRZ 1066).